The primary structure comprises 82 residues: ATP synthase subunit 9, mitochondrial (82 aa).

2 helical membrane passes run 8-28 (IGAG…GNVF) and 45-67 (SFGY…PMMA).

The protein belongs to the ATPase C chain family. F-type ATPases have 2 components, CF(1) - the catalytic core - and CF(0) - the membrane proton channel. CF(1) has five subunits: alpha(3), beta(3), gamma(1), delta(1), epsilon(1). CF(0) has three main subunits: a, b and c.

Its subcellular location is the mitochondrion membrane. Functionally, this protein is one of the chains of the nonenzymatic membrane component (F0) of mitochondrial ATPase. This is ATP synthase subunit 9, mitochondrial (ATP9) from Malus domestica (Apple).